A 433-amino-acid polypeptide reads, in one-letter code: Chaperone SurA (433 aa).

The N-terminal stretch at 1–24 is a signal peptide; that stretch reads MDGIKLLLSIIILYFYTYINCAIA. PpiC domains are found at residues 173 to 274 and 285 to 385; these read NTTF…KVHD and ITEV…QLQN.

The protein resides in the periplasm. The catalysed reaction is [protein]-peptidylproline (omega=180) = [protein]-peptidylproline (omega=0). Its function is as follows. Chaperone involved in the correct folding and assembly of outer membrane proteins. Recognizes specific patterns of aromatic residues and the orientation of their side chains, which are found more frequently in integral outer membrane proteins. May act in both early periplasmic and late outer membrane-associated steps of protein maturation. This Baumannia cicadellinicola subsp. Homalodisca coagulata protein is Chaperone SurA.